A 291-amino-acid chain; its full sequence is 3-hydroxy-5-phosphonooxypentane-2,4-dione thiolase (291 aa).

The active-site Schiff-base intermediate with substrate is K203.

This sequence belongs to the DeoC/FbaB aldolase family. In terms of assembly, homodecamer.

The protein resides in the cytoplasm. The catalysed reaction is dihydroxyacetone phosphate + acetyl-CoA = 3-hydroxy-2,4-dioxopentyl phosphate + CoA. Involved in the degradation of phospho-AI-2, thereby terminating induction of the lsr operon and closing the AI-2 signaling cycle. Catalyzes the transfer of an acetyl moiety from 3-hydroxy-5-phosphonooxypentane-2,4-dione to CoA to form glycerone phosphate and acetyl-CoA. The chain is 3-hydroxy-5-phosphonooxypentane-2,4-dione thiolase from Yersinia pseudotuberculosis serotype O:1b (strain IP 31758).